The following is a 179-amino-acid chain: Large ribosomal subunit protein uL5 (179 aa).

It belongs to the universal ribosomal protein uL5 family. Part of the 50S ribosomal subunit; part of the 5S rRNA/L5/L18/L25 subcomplex. Contacts the 5S rRNA and the P site tRNA. Forms a bridge to the 30S subunit in the 70S ribosome.

Its function is as follows. This is one of the proteins that bind and probably mediate the attachment of the 5S RNA into the large ribosomal subunit, where it forms part of the central protuberance. In the 70S ribosome it contacts protein S13 of the 30S subunit (bridge B1b), connecting the 2 subunits; this bridge is implicated in subunit movement. Contacts the P site tRNA; the 5S rRNA and some of its associated proteins might help stabilize positioning of ribosome-bound tRNAs. The sequence is that of Large ribosomal subunit protein uL5 from Dechloromonas aromatica (strain RCB).